Here is a 194-residue protein sequence, read N- to C-terminus: dTTP/UTP pyrophosphatase (194 aa).

The Proton acceptor role is filled by Asp-68.

The protein belongs to the Maf family. YhdE subfamily. It depends on a divalent metal cation as a cofactor.

It localises to the cytoplasm. It catalyses the reaction dTTP + H2O = dTMP + diphosphate + H(+). It carries out the reaction UTP + H2O = UMP + diphosphate + H(+). In terms of biological role, nucleoside triphosphate pyrophosphatase that hydrolyzes dTTP and UTP. May have a dual role in cell division arrest and in preventing the incorporation of modified nucleotides into cellular nucleic acids. The sequence is that of dTTP/UTP pyrophosphatase from Clostridioides difficile (strain 630) (Peptoclostridium difficile).